We begin with the raw amino-acid sequence, 567 residues long: Adenine deaminase (567 aa).

This sequence belongs to the metallo-dependent hydrolases superfamily. Adenine deaminase family. The cofactor is Mn(2+).

It carries out the reaction adenine + H2O + H(+) = hypoxanthine + NH4(+). This is Adenine deaminase from Methanothrix thermoacetophila (strain DSM 6194 / JCM 14653 / NBRC 101360 / PT) (Methanosaeta thermophila).